A 243-amino-acid polypeptide reads, in one-letter code: Transmembrane protein 174 (243 aa).

A run of 2 helical transmembrane segments spans residues 40–60 (LLFS…MGWI) and 73–93 (LLGP…VCKF).

As to quaternary structure, interacts with SLC34A1; regulates SLC34A1 internalization by PTH and FGF23. Kidney specific. Expressed in renal primary proximal tubule cells.

It localises to the endoplasmic reticulum membrane. The protein resides in the apical cell membrane. Its function is as follows. Regulator of plasma phosphate homeostasis. Decreases serum inorganic phosphate (Pi) uptake by regulating the sodium-phosphate cotransporter SLC34A1 trafficking by PTH and FGF23 in the kidney. The protein is Transmembrane protein 174 (Tmem174) of Mus musculus (Mouse).